The following is a 1140-amino-acid chain: Squamosa promoter-binding-like protein 15 (1140 aa).

Disordered stretches follow at residues 73–112 (RVNA…LNLQ) and 124–177 (DVSP…GGNS). Composition is skewed to low complexity over residues 76–100 (AGLS…EALR) and 125–135 (VSPAATTVSSS). The segment covering 164-177 (ASGGGGGGGGGGNS) has biased composition (gly residues). An SBP-type zinc finger spans residues 184–261 (YPMCQVDDCR…AGHNRRRRKT (78 aa)). Zn(2+) contacts are provided by cysteine 187, cysteine 192, cysteine 209, histidine 212, cysteine 228, cysteine 231, histidine 235, and cysteine 247. The Bipartite nuclear localization signal signature appears at 244–260 (KRSCRRRLAGHNRRRRK). Disordered regions lie at residues 327-382 (NNGN…ADGF), 403-472 (TSNP…TPPY), 496-517 (LSSE…PVTH), and 558-597 (KDSE…DGQD). Positions 345–375 (ASHSQQQDSVQRTTNGFEKQTNGLDKQTNGF) are enriched in polar residues. Over residues 403 to 430 (TSNPDSNTSQSQGSSDSSGNNKSKSQST) the composition is skewed to low complexity. A compositionally biased stretch (basic and acidic residues) spans 450-466 (RKNDALERSPEMYKQPD). Over residues 496-514 (LSSESSNPLDERSPSSSPP) the composition is skewed to polar residues. Low complexity predominate over residues 579–593 (TSTSCSDHSPSTSNS).

Expressed in stems, leaf sheaths, and young panicles.

The protein resides in the nucleus. Trans-acting factor that binds specifically to the consensus nucleotide sequence 5'-TNCGTACAA-3'. In Oryza sativa subsp. indica (Rice), this protein is Squamosa promoter-binding-like protein 15 (SPL15).